The primary structure comprises 150 residues: Large ribosomal subunit protein uL15 (150 aa).

Positions methionine 1–asparagine 15 are enriched in polar residues. The segment at methionine 1 to glycine 53 is disordered. Positions glycine 23 to alanine 32 are enriched in gly residues.

It belongs to the universal ribosomal protein uL15 family. As to quaternary structure, part of the 50S ribosomal subunit.

Binds to the 23S rRNA. The polypeptide is Large ribosomal subunit protein uL15 (Flavobacterium johnsoniae (strain ATCC 17061 / DSM 2064 / JCM 8514 / BCRC 14874 / CCUG 350202 / NBRC 14942 / NCIMB 11054 / UW101) (Cytophaga johnsonae)).